Here is a 190-residue protein sequence, read N- to C-terminus: Ladderlectin (190 aa).

Residues 1–18 form the signal peptide; that stretch reads MAMLTISLLLCAAVALNG. In terms of domain architecture, C-type lectin spans 60 to 179; it reads GSRCFMFVET…GNSFPSGVLQ (120 aa). A disulfide bridge links cysteine 153 with cysteine 169.

As to quaternary structure, multimeric. In terms of tissue distribution, expressed in cells of the branchial epithelium, hepatic sinusoids, biliary epithelium, renal interstitium, skin, and sub-mucosal granular layer of the intestine. Highly expressed in caudal kidney. Moderately expressed in liver. Weakly expressed in gill, spleen, cranial kidney and skin. Isoform 1 is highly expressed in intestine. Isoform 2 is weakly expressed in intestine.

Its function is as follows. Lectin that binds sepharose in a calcium-dependent manner. This is Ladderlectin from Oncorhynchus mykiss (Rainbow trout).